Here is a 264-residue protein sequence, read N- to C-terminus: Glutamate racemase (264 aa).

Substrate contacts are provided by residues 9–10 (DS) and 41–42 (YG). Catalysis depends on Cys72, which acts as the Proton donor/acceptor. 73 to 74 (NT) contacts substrate. The active-site Proton donor/acceptor is Cys183. 184-185 (TH) provides a ligand contact to substrate.

The protein belongs to the aspartate/glutamate racemases family.

The enzyme catalyses L-glutamate = D-glutamate. The protein operates within cell wall biogenesis; peptidoglycan biosynthesis. In terms of biological role, provides the (R)-glutamate required for cell wall biosynthesis. This is Glutamate racemase from Geobacillus sp. (strain WCH70).